Here is a 94-residue protein sequence, read N- to C-terminus: Small ribosomal subunit protein uS19c (94 aa).

It belongs to the universal ribosomal protein uS19 family.

The protein resides in the plastid. Protein S19 forms a complex with S13 that binds strongly to the 16S ribosomal RNA. This is Small ribosomal subunit protein uS19c (rps19) from Epifagus virginiana (Beechdrops).